Consider the following 243-residue polypeptide: 3-deoxy-manno-octulosonate cytidylyltransferase (243 aa).

It belongs to the KdsB family.

Its subcellular location is the cytoplasm. It carries out the reaction 3-deoxy-alpha-D-manno-oct-2-ulosonate + CTP = CMP-3-deoxy-beta-D-manno-octulosonate + diphosphate. The protein operates within nucleotide-sugar biosynthesis; CMP-3-deoxy-D-manno-octulosonate biosynthesis; CMP-3-deoxy-D-manno-octulosonate from 3-deoxy-D-manno-octulosonate and CTP: step 1/1. It participates in bacterial outer membrane biogenesis; lipopolysaccharide biosynthesis. Functionally, activates KDO (a required 8-carbon sugar) for incorporation into bacterial lipopolysaccharide in Gram-negative bacteria. The polypeptide is 3-deoxy-manno-octulosonate cytidylyltransferase (Helicobacter pylori (strain P12)).